The sequence spans 144 residues: 3-hydroxyacyl-[acyl-carrier-protein] dehydratase FabZ (144 aa).

Residue H51 is part of the active site.

Belongs to the thioester dehydratase family. FabZ subfamily.

It is found in the cytoplasm. The catalysed reaction is a (3R)-hydroxyacyl-[ACP] = a (2E)-enoyl-[ACP] + H2O. Functionally, involved in unsaturated fatty acids biosynthesis. Catalyzes the dehydration of short chain beta-hydroxyacyl-ACPs and long chain saturated and unsaturated beta-hydroxyacyl-ACPs. The sequence is that of 3-hydroxyacyl-[acyl-carrier-protein] dehydratase FabZ (fabZ2) from Lactococcus lactis subsp. lactis (strain IL1403) (Streptococcus lactis).